Reading from the N-terminus, the 124-residue chain is Ribonuclease pancreatic (124 aa).

The disordered stretch occupies residues 1 to 24 (KESSAMKFQRQHMDSSGSPSTNAN). Substrate is bound by residues Lys7 and Arg10. The active-site Proton acceptor is the His12. A compositionally biased stretch (polar residues) spans 14–24 (DSSGSPSTNAN). Cystine bridges form between Cys26/Cys84, Cys40/Cys95, Cys58/Cys110, and Cys65/Cys72. Asn34 carries N-linked (GlcNAc...) asparagine glycosylation. Substrate is bound by residues 41–45 (KPVNT), Lys66, and Arg85. His119 functions as the Proton donor in the catalytic mechanism.

Belongs to the pancreatic ribonuclease family. In terms of assembly, monomer. Interacts with and forms tight 1:1 complexes with RNH1. Dimerization of two such complexes may occur. Interaction with RNH1 inhibits this protein. As to expression, pancreas.

Its subcellular location is the secreted. It carries out the reaction an [RNA] containing cytidine + H2O = an [RNA]-3'-cytidine-3'-phosphate + a 5'-hydroxy-ribonucleotide-3'-[RNA].. The catalysed reaction is an [RNA] containing uridine + H2O = an [RNA]-3'-uridine-3'-phosphate + a 5'-hydroxy-ribonucleotide-3'-[RNA].. Endonuclease that catalyzes the cleavage of RNA on the 3' side of pyrimidine nucleotides. Acts on single-stranded and double-stranded RNA. The polypeptide is Ribonuclease pancreatic (RNASE1) (Chinchilla chinchilla (Short-tailed chinchilla)).